The chain runs to 473 residues: Cysteine--tRNA ligase (473 aa).

Cysteine 28 contacts Zn(2+). Positions 30-40 match the 'HIGH' region motif; the sequence is MTVYDFCHIGH. Zn(2+) contacts are provided by cysteine 212, histidine 237, and glutamate 241. The short motif at 277–281 is the 'KMSKS' region element; that stretch reads KMSKS. Lysine 280 serves as a coordination point for ATP.

Belongs to the class-I aminoacyl-tRNA synthetase family. Monomer. Requires Zn(2+) as cofactor.

It is found in the cytoplasm. It catalyses the reaction tRNA(Cys) + L-cysteine + ATP = L-cysteinyl-tRNA(Cys) + AMP + diphosphate. The protein is Cysteine--tRNA ligase of Polynucleobacter necessarius subsp. necessarius (strain STIR1).